A 626-amino-acid chain; its full sequence is Phosphomethylpyrimidine synthase (626 aa).

Positions 1–22 are disordered; that stretch reads MTKQEKAINLSESAQVDQQSVQ. Over residues 10-22 the composition is skewed to polar residues; the sequence is LSESAQVDQQSVQ. Substrate-binding positions include N232, M261, Y290, H326, 346–348, 387–390, and E426; these read SRG and DGLR. Residue H430 coordinates Zn(2+). Y453 contributes to the substrate binding site. Position 494 (H494) interacts with Zn(2+). Residues C574, C577, and C582 each coordinate [4Fe-4S] cluster.

It belongs to the ThiC family. As to quaternary structure, homodimer. Requires [4Fe-4S] cluster as cofactor.

The enzyme catalyses 5-amino-1-(5-phospho-beta-D-ribosyl)imidazole + S-adenosyl-L-methionine = 4-amino-2-methyl-5-(phosphooxymethyl)pyrimidine + CO + 5'-deoxyadenosine + formate + L-methionine + 3 H(+). The protein operates within cofactor biosynthesis; thiamine diphosphate biosynthesis. Functionally, catalyzes the synthesis of the hydroxymethylpyrimidine phosphate (HMP-P) moiety of thiamine from aminoimidazole ribotide (AIR) in a radical S-adenosyl-L-methionine (SAM)-dependent reaction. This chain is Phosphomethylpyrimidine synthase, found in Pseudomonas putida (strain ATCC 700007 / DSM 6899 / JCM 31910 / BCRC 17059 / LMG 24140 / F1).